A 494-amino-acid polypeptide reads, in one-letter code: Glutamate--tRNA ligase (494 aa).

A 'HIGH' region motif is present at residues 10–20 (PSPTGDPHVGT). Positions 107, 109, 134, and 136 each coordinate Zn(2+). The short motif at 251 to 255 (KLSKR) is the 'KMSKS' region element. ATP is bound at residue lysine 254.

Belongs to the class-I aminoacyl-tRNA synthetase family. Glutamate--tRNA ligase type 1 subfamily. Monomer. It depends on Zn(2+) as a cofactor.

Its subcellular location is the cytoplasm. The enzyme catalyses tRNA(Glu) + L-glutamate + ATP = L-glutamyl-tRNA(Glu) + AMP + diphosphate. Catalyzes the attachment of glutamate to tRNA(Glu) in a two-step reaction: glutamate is first activated by ATP to form Glu-AMP and then transferred to the acceptor end of tRNA(Glu). The protein is Glutamate--tRNA ligase of Pseudomonas paraeruginosa (strain DSM 24068 / PA7) (Pseudomonas aeruginosa (strain PA7)).